The following is a 474-amino-acid chain: Kynureninase 2 (474 aa).

Pyridoxal 5'-phosphate-binding positions include Leu-144, Thr-145, 172 to 175 (FPSD), Asp-258, His-261, and Tyr-283. An N6-(pyridoxal phosphate)lysine modification is found at Lys-284. Residues Trp-323 and Thr-351 each contribute to the pyridoxal 5'-phosphate site.

This sequence belongs to the kynureninase family. In terms of assembly, homodimer. Requires pyridoxal 5'-phosphate as cofactor.

It is found in the cytoplasm. It carries out the reaction L-kynurenine + H2O = anthranilate + L-alanine + H(+). The enzyme catalyses 3-hydroxy-L-kynurenine + H2O = 3-hydroxyanthranilate + L-alanine + H(+). It participates in amino-acid degradation; L-kynurenine degradation; L-alanine and anthranilate from L-kynurenine: step 1/1. Its pathway is cofactor biosynthesis; NAD(+) biosynthesis; quinolinate from L-kynurenine: step 2/3. Catalyzes the cleavage of L-kynurenine (L-Kyn) and L-3-hydroxykynurenine (L-3OHKyn) into anthranilic acid (AA) and 3-hydroxyanthranilic acid (3-OHAA), respectively. The protein is Kynureninase 2 (bna5-2) of Emericella nidulans (strain FGSC A4 / ATCC 38163 / CBS 112.46 / NRRL 194 / M139) (Aspergillus nidulans).